Here is a 347-residue protein sequence, read N- to C-terminus: Ribosomal RNA small subunit methyltransferase C (347 aa).

The protein belongs to the methyltransferase superfamily. RsmC family. As to quaternary structure, monomer.

The protein resides in the cytoplasm. It carries out the reaction guanosine(1207) in 16S rRNA + S-adenosyl-L-methionine = N(2)-methylguanosine(1207) in 16S rRNA + S-adenosyl-L-homocysteine + H(+). In terms of biological role, specifically methylates the guanine in position 1207 of 16S rRNA in the 30S particle. The sequence is that of Ribosomal RNA small subunit methyltransferase C from Shewanella baltica (strain OS195).